Reading from the N-terminus, the 874-residue chain is Putative disease resistance protein At5g05400 (874 aa).

Residues 22-74 (LSRNQNRFRNLVDHVAALKKTVRQLEARRDDLLKRIKVQEDRGLNLLDEVQQW) are a coiled coil. Residues 139-434 (AQKGPIPKVE…GQGIILGSKG (296 aa)) enclose the NB-ARC domain. Residue 182-189 (GMGGVGKT) coordinates ATP. LRR repeat units lie at residues 483-505 (QKNV…EDQK), 506-527 (AVRR…LHCP), 528-548 (KLET…EFLS), 552-574 (ILMV…SPLY), 575-597 (SLRF…YALR), 598-620 (NLLY…HDLP), and 621-642 (NLEV…VRQI).

The protein belongs to the disease resistance NB-LRR family.

Its function is as follows. Potential disease resistance protein. The polypeptide is Putative disease resistance protein At5g05400 (Arabidopsis thaliana (Mouse-ear cress)).